Consider the following 1309-residue polypeptide: Lysine-specific demethylase 2B (1309 aa).

Ser-26 carries the post-translational modification Phosphoserine. In terms of domain architecture, JmjC spans 147–315 (FSHTKLEHLV…MQLRIYEIED (169 aa)). Substrate is bound at residue Thr-208. Fe cation is bound by residues His-211 and Asp-213. Lys-228 serves as a coordination point for substrate. A Fe cation-binding site is contributed by His-283. A compositionally biased stretch (acidic residues) spans 378–403 (DMEEESCEQQPQEEEEEEEDKEEEGD). Positions 378 to 476 (DMEEESCEQQ…PTGSPATEVS (99 aa)) are disordered. Over residues 404–413 (GADKTPKPPT) the composition is skewed to basic and acidic residues. Residues 415-424 (DPTSPTSTPP) are compositionally biased toward low complexity. 2 positions are modified to phosphoserine: Ser-447 and Ser-450. Phosphothreonine is present on Thr-466. Polar residues predominate over residues 467–476 (PTGSPATEVS). At Ser-470 the chain carries Phosphoserine. The CXXC-type zinc finger occupies 579 to 625 (ARRRRTRCRKCEACLRTECGECHFCKDMKKFGGPGRMKQSCIMRQCI). Cys-586, Cys-589, Cys-592, Cys-597, Cys-600, Cys-603, Cys-619, Cys-624, Cys-635, Cys-638, Cys-661, Cys-664, His-669, Cys-672, Cys-692, and Cys-695 together coordinate Zn(2+). The PHD-type zinc finger occupies 632 to 698 (TAVCLVCGEA…CWECPKCNHA (67 aa)). Disordered regions lie at residues 700-816 (KTGK…SLSP) and 828-1005 (QLKP…SASP). Residues 722 to 772 (KEQKMNRDNKEGQEPAKRRSECEEAPRRRSDEHPKKVPADGILRRKSDDVH) are compositionally biased toward basic and acidic residues. Low complexity predominate over residues 792–816 (SSLQTSPGSSSHLSPRPPLGSSLSP). Residues Lys-830 and Lys-863 each participate in a glycyl lysine isopeptide (Lys-Gly) (interchain with G-Cter in SUMO2) cross-link. Over residues 883–892 (SRSSSPTAGP) the composition is skewed to polar residues. Residues 905–914 (KVKMRRKRRL) are compositionally biased toward basic residues. The segment covering 915–933 (VNKELSKELSKELNHEIQK) has biased composition (basic and acidic residues). Residues 916–944 (NKELSKELSKELNHEIQKTESTLAHESQQ) adopt a coiled-coil conformation. A Phosphoserine modification is found at Ser-924. Positions 934–946 (TESTLAHESQQPI) are enriched in polar residues. Phosphoserine occurs at positions 948 and 952. Over residues 955–968 (DEPKRPLSHCERPH) the composition is skewed to basic and acidic residues. A phosphoserine mark is found at Ser-991 and Ser-1004. An F-box domain is found at 1032-1078 (DGAAHVMHREVWMAVFSYLSHRDLCVCMRVCRTWNRWCCDKRLWTRI). LRR repeat units lie at residues 1106–1127 (WTNISKKQLSWLINRLPGLRDL), 1129–1155 (LSGCSWIAVSALCSSSCPLLRTLDVQW), 1195–1220 (GLDITDVSLRLIIRHMPLLSKLQLSY), 1221–1250 (CNHINDQSINLLTAVGTTTRDSLTEVNLSD), 1251–1275 (CNKVTDLCLSFFKRCGNICHIDLRY), and 1276–1309 (CKQVTKEGCEQFIAEMSVSVQFGQVEEKLLQKLS).

The protein belongs to the JHDM1 histone demethylase family. Interacts with SKP1, forming heterodimers. The KDM2B-SKP1 heterodimeric complex interacts with the PCGF1-BCORL heterodimeric complex to form a homotetrameric polycomb repression complex 1 (PRC1.1). Directly interacts with CUL1. The SKP1-KDM2B interacts with UBB. The cofactor is Fe(2+).

It is found in the nucleus. Its subcellular location is the nucleolus. The protein resides in the chromosome. It carries out the reaction N(6),N(6)-dimethyl-L-lysyl(36)-[histone H3] + 2 2-oxoglutarate + 2 O2 = L-lysyl(36)-[histone H3] + 2 formaldehyde + 2 succinate + 2 CO2. Its activity is regulated as follows. Histone demethylase activity is inhibited by fumarate. Its function is as follows. Histone demethylase that demethylates 'Lys-4' and 'Lys-36' of histone H3, thereby playing a central role in histone code. Preferentially demethylates trimethylated H3 'Lys-4' and dimethylated H3 'Lys-36' residue while it has weak or no activity for mono- and tri-methylated H3 'Lys-36'. Preferentially binds the transcribed region of ribosomal RNA and represses the transcription of ribosomal RNA genes which inhibits cell growth and proliferation. May also serve as a substrate-recognition component of the SCF (SKP1-CUL1-F-box protein)-type E3 ubiquitin ligase complex. This chain is Lysine-specific demethylase 2B (Kdm2b), found in Mus musculus (Mouse).